The following is a 190-amino-acid chain: RNA pyrophosphohydrolase (190 aa).

The Nudix hydrolase domain maps to 6–149; the sequence is GYRPNVGIVL…KRGVYARALC (144 aa). Residues 38–59 carry the Nudix box motif; it reads GGMHSDETPVEAMYRELNEEIG.

The protein belongs to the Nudix hydrolase family. RppH subfamily. A divalent metal cation serves as cofactor.

Accelerates the degradation of transcripts by removing pyrophosphate from the 5'-end of triphosphorylated RNA, leading to a more labile monophosphorylated state that can stimulate subsequent ribonuclease cleavage. In Xylella fastidiosa (strain M12), this protein is RNA pyrophosphohydrolase.